The chain runs to 347 residues: S-adenosylmethionine decarboxylase proenzyme (347 aa).

Active-site residues include Glu-10 and Glu-13. Ser-66 functions as the Schiff-base intermediate with substrate; via pyruvic acid in the catalytic mechanism. Ser-66 is modified (pyruvic acid (Ser); by autocatalysis). Residue Cys-80 is the Proton donor; for catalytic activity of the active site. Residues Ser-237 and His-251 each act as proton acceptor; for processing activity in the active site.

The protein belongs to the eukaryotic AdoMetDC family. The cofactor is pyruvate. Post-translationally, is synthesized initially as an inactive proenzyme. Formation of the active enzyme involves a self-maturation process in which the active site pyruvoyl group is generated from an internal serine residue via an autocatalytic post-translational modification. Two non-identical subunits are generated from the proenzyme in this reaction, and the pyruvate is formed at the N-terminus of the alpha chain, which is derived from the carboxyl end of the proenzyme. The post-translation cleavage follows an unusual pathway, termed non-hydrolytic serinolysis, in which the side chain hydroxyl group of the serine supplies its oxygen atom to form the C-terminus of the beta chain, while the remainder of the serine residue undergoes an oxidative deamination to produce ammonia and the pyruvoyl group blocking the N-terminus of the alpha chain.

The catalysed reaction is S-adenosyl-L-methionine + H(+) = S-adenosyl 3-(methylsulfanyl)propylamine + CO2. It participates in amine and polyamine biosynthesis; S-adenosylmethioninamine biosynthesis; S-adenosylmethioninamine from S-adenosyl-L-methionine: step 1/1. The polypeptide is S-adenosylmethionine decarboxylase proenzyme (SamDC) (Drosophila melanogaster (Fruit fly)).